The chain runs to 348 residues: Fructose-1,6-bisphosphatase (348 aa).

The short motif at 2–5 is the Pro/N-degron element; that stretch reads PTLV. Ser12 carries the post-translational modification Phosphoserine. Residues 27–31 and 38–42 contribute to the AMP site; these read IIEHQ and TGDFT. Residues Asp79 and Glu108 each coordinate Mg(2+). 122–123 is a binding site for AMP; sequence SY. 3 residues coordinate Mg(2+): Asp128, Ile130, and Asp131. 131-134 contacts substrate; it reads DGSS. An AMP-binding site is contributed by Arg150. Residues 222-225, 255-260, Tyr276, and 286-288 each bind substrate; these read NEGN, RYVGSM, and KLR. Glu292 contacts Mg(2+).

The protein belongs to the FBPase class 1 family. Homotetramer. The cofactor is Mg(2+). Ubiquitinated. Targeted for proteasomal degradation when cells are shifted to glucose-containing growth medium.

The enzyme catalyses beta-D-fructose 1,6-bisphosphate + H2O = beta-D-fructose 6-phosphate + phosphate. It functions in the pathway carbohydrate biosynthesis; gluconeogenesis. With respect to regulation, subject to complex allosteric regulation. The enzyme can assume an active R-state, or an inactive T-state. Intermediate conformations may exist. AMP acts as allosteric inhibitor. AMP binding affects the turnover of bound substrate and not the affinity for substrate. In Saccharomyces cerevisiae (strain ATCC 204508 / S288c) (Baker's yeast), this protein is Fructose-1,6-bisphosphatase (FBP1).